Here is a 568-residue protein sequence, read N- to C-terminus: Urease subunit alpha (568 aa).

The 438-residue stretch at 131-568 folds into the Urease domain; sequence GGMDAHIHFI…LPLAQRYFLY (438 aa). The Ni(2+) site is built by His136, His138, and Lys219. At Lys219 the chain carries N6-carboxylysine. His221 lines the substrate pocket. Ni(2+) contacts are provided by His248 and His274. His322 (proton donor) is an active-site residue. Residue Asp362 participates in Ni(2+) binding.

It belongs to the metallo-dependent hydrolases superfamily. Urease alpha subunit family. As to quaternary structure, heterotrimer of UreA (gamma), UreB (beta) and UreC (alpha) subunits. Three heterotrimers associate to form the active enzyme. The cofactor is Ni cation. In terms of processing, carboxylation allows a single lysine to coordinate two nickel ions.

It localises to the cytoplasm. The enzyme catalyses urea + 2 H2O + H(+) = hydrogencarbonate + 2 NH4(+). The protein operates within nitrogen metabolism; urea degradation; CO(2) and NH(3) from urea (urease route): step 1/1. The polypeptide is Urease subunit alpha (Cereibacter sphaeroides (strain KD131 / KCTC 12085) (Rhodobacter sphaeroides)).